A 447-amino-acid polypeptide reads, in one-letter code: Histidine--tRNA ligase (447 aa).

Belongs to the class-II aminoacyl-tRNA synthetase family. Homodimer.

It localises to the cytoplasm. It carries out the reaction tRNA(His) + L-histidine + ATP = L-histidyl-tRNA(His) + AMP + diphosphate + H(+). In Synechocystis sp. (strain ATCC 27184 / PCC 6803 / Kazusa), this protein is Histidine--tRNA ligase (hisS).